The following is a 613-amino-acid chain: Chaperone protein DnaK (613 aa).

The residue at position 173 (threonine 173) is a Phosphothreonine; by autocatalysis. Residues 577 to 613 form a disordered region; that stretch reads AKQAQAQQEGGAEGAQKADDNVVDAEYEEVNDDQEKK. Residues 597–613 are compositionally biased toward acidic residues; it reads NVVDAEYEEVNDDQEKK.

This sequence belongs to the heat shock protein 70 family.

In terms of biological role, acts as a chaperone. This is Chaperone protein DnaK from Bacillus pumilus (strain SAFR-032).